The following is a 668-amino-acid chain: MAAATGAQDRRDGGEEALMRLADARVAIEGVNLEIDGGRFAAKVVAGWEVAVEADIFCDGHDSIDAAVLHRQRGTDDWIEVRMEFLVNDRWQAHVTFAENAFHELTFLAWRDLYTTWRKEVAKKLAAGQKIDLELEEGRRLLQSVETAGAEDRALVDRILGEDGADQEAGARFARMSSPEAVAAMKRCAPRTNLTCYKILPIFADREAAAFSAWYEMMPRSQSDDPERHGTFDDVIRKLPYVRDLGFDVLYFTPIHPIGRVNRKGRNNSLTPAPDDPGSPYAIGSEEGGHDAIHPELGDFESFGRLVEAAHAHGLEIALDFAIQCAPDHPWIREHPEWFDWRPDGTIKFAENPPKKYEDIVNVHFYRGALPELWYALRDVVLFWVEKGVKIFRVDNPHTKPFPFWEWMIGEVQSQHPDVIFLAEAFTRPKVMKRLGKVGYGQSYSYFTWRNTKAELIDYLTELTTEECRHYMRPNFFANTPDINPVYLQHSGRAGFRVRLALAATLGGNYGLYNGYEICEATPVPGKEEYFNSEKYQLRAWDFDQPGHIQDDIRLMNHIRRTHPAMRDFTRLRFYDAHNDSVLAYGKSTEDKQDFLLFHVNLDPHAAQTFEFEVPLWEFGLPDDASVEVEDLLNGNRFTWHGKWQWLELDPQTRPYAVWRLYAPGMPR.

The disordered stretch occupies residues 263–288; the sequence is RKGRNNSLTPAPDDPGSPYAIGSEEG. Residues K264, Q324, and D359 each contribute to the alpha-maltose 1-phosphate site. D395 serves as the catalytic Nucleophile. N396 lines the alpha-maltose 1-phosphate pocket. E424 serves as the catalytic Proton donor. 535–536 is an alpha-maltose 1-phosphate binding site; sequence KY.

This sequence belongs to the glycosyl hydrolase 13 family. GlgE subfamily. In terms of assembly, homodimer.

It carries out the reaction alpha-maltose 1-phosphate + [(1-&gt;4)-alpha-D-glucosyl](n) = [(1-&gt;4)-alpha-D-glucosyl](n+2) + phosphate. Functionally, maltosyltransferase that uses maltose 1-phosphate (M1P) as the sugar donor to elongate linear or branched alpha-(1-&gt;4)-glucans. Is involved in a branched alpha-glucan biosynthetic pathway from trehalose, together with TreS, Mak and GlgB. In Cereibacter sphaeroides (strain ATCC 17023 / DSM 158 / JCM 6121 / CCUG 31486 / LMG 2827 / NBRC 12203 / NCIMB 8253 / ATH 2.4.1.) (Rhodobacter sphaeroides), this protein is Alpha-1,4-glucan:maltose-1-phosphate maltosyltransferase.